The sequence spans 551 residues: DNA ligase (551 aa).

E246 is an ATP binding site. K248 (N6-AMP-lysine intermediate) is an active-site residue. ATP is bound by residues R253, R268, E298, F337, R414, and K420.

This sequence belongs to the ATP-dependent DNA ligase family. Requires Mg(2+) as cofactor.

The enzyme catalyses ATP + (deoxyribonucleotide)n-3'-hydroxyl + 5'-phospho-(deoxyribonucleotide)m = (deoxyribonucleotide)n+m + AMP + diphosphate.. In terms of biological role, DNA ligase that seals nicks in double-stranded DNA during DNA replication, DNA recombination and DNA repair. The sequence is that of DNA ligase from Methanobrevibacter smithii (strain ATCC 35061 / DSM 861 / OCM 144 / PS).